Here is a 229-residue protein sequence, read N- to C-terminus: Peroxiredoxin-like 2A (229 aa).

The segment at 14 to 112 (MWSIGAGALG…DQLGVPLYAV (99 aa)) is thioredoxin fold. Residues C85 and C88 each act as redox-active in the active site.

The protein belongs to the peroxiredoxin-like PRXL2 family. PRXL2A subfamily. In terms of tissue distribution, expressed in CSF1 and TNFSF11-stimulated CD14(+) peripheral blood mononuclear cells (PBMCs).

It localises to the cytoplasm. The protein resides in the secreted. In terms of biological role, involved in redox regulation of the cell. Acts as an antioxidant. Inhibits TNFSF11-induced NFKB1 and JUN activation and osteoclast differentiation. May affect bone resorption and help to maintain bone mass. Acts as a negative regulator of macrophage-mediated inflammation by inhibiting macrophage production of inflammatory cytokines, probably through suppression of the MAPK signaling pathway. The protein is Peroxiredoxin-like 2A of Homo sapiens (Human).